The chain runs to 502 residues: ATP synthase subunit alpha (502 aa).

ATP is bound at residue 169–176 (GDRQTGKT).

Belongs to the ATPase alpha/beta chains family. As to quaternary structure, F-type ATPases have 2 components, CF(1) - the catalytic core - and CF(0) - the membrane proton channel. CF(1) has five subunits: alpha(3), beta(3), gamma(1), delta(1), epsilon(1). CF(0) has three main subunits: a(1), b(2) and c(9-12). The alpha and beta chains form an alternating ring which encloses part of the gamma chain. CF(1) is attached to CF(0) by a central stalk formed by the gamma and epsilon chains, while a peripheral stalk is formed by the delta and b chains.

It is found in the cell membrane. It catalyses the reaction ATP + H2O + 4 H(+)(in) = ADP + phosphate + 5 H(+)(out). In terms of biological role, produces ATP from ADP in the presence of a proton gradient across the membrane. The alpha chain is a regulatory subunit. This chain is ATP synthase subunit alpha, found in Staphylococcus aureus (strain COL).